Consider the following 91-residue polypeptide: UPF0250 protein mma_3250 (91 aa).

It belongs to the UPF0250 family.

This chain is UPF0250 protein mma_3250, found in Janthinobacterium sp. (strain Marseille) (Minibacterium massiliensis).